The primary structure comprises 185 residues: Ribosome-recycling factor (185 aa).

The protein belongs to the RRF family.

It localises to the cytoplasm. In terms of biological role, responsible for the release of ribosomes from messenger RNA at the termination of protein biosynthesis. May increase the efficiency of translation by recycling ribosomes from one round of translation to another. In Corynebacterium glutamicum (strain ATCC 13032 / DSM 20300 / JCM 1318 / BCRC 11384 / CCUG 27702 / LMG 3730 / NBRC 12168 / NCIMB 10025 / NRRL B-2784 / 534), this protein is Ribosome-recycling factor.